The chain runs to 667 residues: Acetoacetyl-CoA synthetase (667 aa).

The protein belongs to the ATP-dependent AMP-binding enzyme family.

Its subcellular location is the cytoplasm. The protein localises to the cytosol. The catalysed reaction is acetoacetate + ATP + CoA = acetoacetyl-CoA + AMP + diphosphate. In terms of biological role, converts acetoacetate to acetoacetyl-CoA in the cytosol. Ketone body-utilizing enzyme, responsible for the synthesis of cholesterol and fatty acids. The polypeptide is Acetoacetyl-CoA synthetase (AACS) (Gallus gallus (Chicken)).